Here is a 411-residue protein sequence, read N- to C-terminus: Class E basic helix-loop-helix protein 40 (411 aa).

Positions 1–21 (MERIPSAQPPPTCLPKTPGLE) are disordered. Positions 1 to 139 (MERIPSAQPP…LSGKNIEAGQ (139 aa)) are essential for interaction with BMAL1, E-box binding and repressor activity against the CLOCK-BMAL1 heterodimer. Positions 52 to 107 (TYKLPHRLIEKKRRDRINECIAQLKDLLPEHLKLTTLGHLEKAVVLELTLKHVKAL) constitute a bHLH domain. Positions 75 to 79 (LKDLL) are necessary for interaction with RXRA and repressor activity against RXRA. The Orange domain maps to 142–175 (FCSGFQTCAREVLQYLAKHENTRDLKSSQLVTHL). Lys159 is covalently cross-linked (Glycyl lysine isopeptide (Lys-Gly) (interchain with G-Cter in SUMO1, SUMO2 and SUMO3)). Lys167 is covalently cross-linked (Glycyl lysine isopeptide (Lys-Gly) (interchain with G-Cter in SUMO2)). A disordered region spans residues 186 to 293 (SASRKPLDSA…EPPTKKSRMQ (108 aa)). The residue at position 235 (Ser235) is a Phosphoserine. A compositionally biased stretch (basic and acidic residues) spans 248–271 (ELEKGDLRSEQPYFKSDHGRRFTV). Residue Lys279 forms a Glycyl lysine isopeptide (Lys-Gly) (interchain with G-Cter in SUMO1); alternate linkage. Lys279 is covalently cross-linked (Glycyl lysine isopeptide (Lys-Gly) (interchain with G-Cter in SUMO1, SUMO2 and SUMO3); alternate). Lys279 participates in a covalent cross-link: Glycyl lysine isopeptide (Lys-Gly) (interchain with G-Cter in SUMO2); alternate. Lys288 is covalently cross-linked (Glycyl lysine isopeptide (Lys-Gly) (interchain with G-Cter in SUMO2)). Residue Ser383 is modified to Phosphoserine.

Homodimer. Heterodimer with BHLHE41/DEC2. Interacts with TCF3/E47. Interacts with ubiquitin-conjugating enzyme UBE2I/UBC9. Interacts with HDAC1, SUMO1, RXRA and BMAL1. In terms of processing, ubiquitinated; which may lead to proteasomal degradation. Sumoylation inhibits its ubiquitination and promotes its negative regulation of the CLOCK-BMAL1 heterodimer transcriptional activator activity. In terms of tissue distribution, expressed in heart, spleen, lung, liver, muscle, kidney, uterus and gut. Highly expressed in the cerebral cortex, especially in the fifth layer, thalamus, superior colliculus, olfactory bulb, piriform cortex, hippocampus and hypothalamic nuclei.

The protein localises to the cytoplasm. Its subcellular location is the nucleus. Transcriptional repressor involved in the regulation of the circadian rhythm by negatively regulating the activity of the clock genes and clock-controlled genes. Acts as the negative limb of a novel autoregulatory feedback loop (DEC loop) which differs from the one formed by the PER and CRY transcriptional repressors (PER/CRY loop). Both these loops are interlocked as it represses the expression of PER1/2 and in turn is repressed by PER1/2 and CRY1/2. Represses the activity of the circadian transcriptional activator: CLOCK-BMAL1|BMAL2 heterodimer by competing for the binding to E-box elements (5'-CACGTG-3') found within the promoters of its target genes. Negatively regulates its own expression and the expression of DBP and BHLHE41/DEC2. Acts as a corepressor of RXR and the RXR-LXR heterodimers and represses the ligand-induced RXRA and NR1H3/LXRA transactivation activity. May be involved in the regulation of chondrocyte differentiation via the cAMP pathway. Represses the transcription of NR0B2 and attentuates the transactivation of NR0B2 by the CLOCK-BMAL1 complex. Drives the circadian rhythm of blood pressure through transcriptional repression of ATP1B1 in the cardiovascular system. The sequence is that of Class E basic helix-loop-helix protein 40 (Bhlhe40) from Rattus norvegicus (Rat).